The following is a 375-amino-acid chain: Serpentine receptor class alpha-39 (375 aa).

Transmembrane regions (helical) follow at residues 17-37 (LFAI…LFII), 51-71 (LVFL…LTAW), 99-119 (IRGT…GILL), 138-158 (LGTI…FILL), 183-203 (VYVM…VHLV), 236-256 (TPLL…VSVF), and 275-295 (LFIM…ELWL).

It belongs to the nematode receptor-like protein sra family.

Its subcellular location is the membrane. The protein is Serpentine receptor class alpha-39 (sra-39) of Caenorhabditis elegans.